The sequence spans 78 residues: Large ribosomal subunit protein bL28 (78 aa).

The protein belongs to the bacterial ribosomal protein bL28 family.

The sequence is that of Large ribosomal subunit protein bL28 from Azoarcus sp. (strain BH72).